The primary structure comprises 504 residues: Probable protein phosphatase 2C 18 (504 aa).

Residues 1–49 are disordered; it reads MGLCYSVDRTTGKEPGEASSTATTAETVEERSGSGRWRRPRDLKGGGDI. Residues 17 to 26 are compositionally biased toward low complexity; sequence EASSTATTAE. Residues 67–399 form the PPM-type phosphatase domain; sequence IACLYTQQGK…DDCTVVCLFL (333 aa). Mn(2+) contacts are provided by aspartate 103, glycine 104, aspartate 344, and aspartate 390. Positions 410 to 435 are disordered; sequence TNVKKDSPKEESIESVTNSTSKEEDE. The span at 412-421 shows a compositional bias: basic and acidic residues; sequence VKKDSPKEES.

It belongs to the PP2C family. It depends on Mg(2+) as a cofactor. Mn(2+) serves as cofactor.

It catalyses the reaction O-phospho-L-seryl-[protein] + H2O = L-seryl-[protein] + phosphate. It carries out the reaction O-phospho-L-threonyl-[protein] + H2O = L-threonyl-[protein] + phosphate. The chain is Probable protein phosphatase 2C 18 from Arabidopsis thaliana (Mouse-ear cress).